The primary structure comprises 239 residues: Geranylgeranylglyceryl phosphate synthase (239 aa).

Residues Asp18 and Ser45 each contribute to the Mg(2+) site. Sn-glycerol 1-phosphate contacts are provided by residues 166 to 172 (YLEAGSG), 197 to 198 (GG), and 219 to 220 (GT).

It belongs to the GGGP/HepGP synthase family. Group II subfamily. The cofactor is Mg(2+).

The protein resides in the cytoplasm. The enzyme catalyses sn-glycerol 1-phosphate + (2E,6E,10E)-geranylgeranyl diphosphate = sn-3-O-(geranylgeranyl)glycerol 1-phosphate + diphosphate. Its pathway is membrane lipid metabolism; glycerophospholipid metabolism. In terms of biological role, prenyltransferase that catalyzes the transfer of the geranylgeranyl moiety of geranylgeranyl diphosphate (GGPP) to the C3 hydroxyl of sn-glycerol-1-phosphate (G1P). This reaction is the first ether-bond-formation step in the biosynthesis of archaeal membrane lipids. The chain is Geranylgeranylglyceryl phosphate synthase from Pyrobaculum islandicum (strain DSM 4184 / JCM 9189 / GEO3).